We begin with the raw amino-acid sequence, 700 residues long: Elongation factor G 2 (700 aa).

Positions 8 to 290 constitute a tr-type G domain; that stretch reads ERYRNIGISA…AVIDFLPSPV (283 aa). GTP contacts are provided by residues 17-24, 88-92, and 142-145; these read AHIDAGKT, DTPGH, and NKMD.

This sequence belongs to the TRAFAC class translation factor GTPase superfamily. Classic translation factor GTPase family. EF-G/EF-2 subfamily.

The protein resides in the cytoplasm. Functionally, catalyzes the GTP-dependent ribosomal translocation step during translation elongation. During this step, the ribosome changes from the pre-translocational (PRE) to the post-translocational (POST) state as the newly formed A-site-bound peptidyl-tRNA and P-site-bound deacylated tRNA move to the P and E sites, respectively. Catalyzes the coordinated movement of the two tRNA molecules, the mRNA and conformational changes in the ribosome. The chain is Elongation factor G 2 from Burkholderia orbicola (strain AU 1054).